Reading from the N-terminus, the 148-residue chain is Ubiquitin-conjugating enzyme E2 28 (148 aa).

The UBC core domain occupies 1-147 (MASKRILKEL…ARSWTQKYAM (147 aa)). Cys-85 functions as the Glycyl thioester intermediate in the catalytic mechanism.

Belongs to the ubiquitin-conjugating enzyme family. Interacts with SINAT5. In terms of tissue distribution, expressed in seeds, pistils, siliques, hypocotyls and leaves.

It catalyses the reaction S-ubiquitinyl-[E1 ubiquitin-activating enzyme]-L-cysteine + [E2 ubiquitin-conjugating enzyme]-L-cysteine = [E1 ubiquitin-activating enzyme]-L-cysteine + S-ubiquitinyl-[E2 ubiquitin-conjugating enzyme]-L-cysteine.. It functions in the pathway protein modification; protein ubiquitination. In terms of biological role, accepts the ubiquitin from the E1 complex and catalyzes its covalent attachment to other proteins. This chain is Ubiquitin-conjugating enzyme E2 28, found in Arabidopsis thaliana (Mouse-ear cress).